Consider the following 272-residue polypeptide: tRNA pseudouridine synthase A (272 aa).

Aspartate 51 acts as the Nucleophile in catalysis. Residue tyrosine 109 coordinates substrate.

It belongs to the tRNA pseudouridine synthase TruA family. As to quaternary structure, homodimer.

The enzyme catalyses uridine(38/39/40) in tRNA = pseudouridine(38/39/40) in tRNA. In terms of biological role, formation of pseudouridine at positions 38, 39 and 40 in the anticodon stem and loop of transfer RNAs. The polypeptide is tRNA pseudouridine synthase A (Verminephrobacter eiseniae (strain EF01-2)).